A 696-amino-acid chain; its full sequence is Solute carrier family 53 member 1 (696 aa).

Over 1 to 228 (MKFAEHLSAH…RVPPLGAAQP (228 aa)) the chain is Cytoplasmic. One can recognise an SPX domain in the interval 2-224 (KFAEHLSAHI…MKRLRVPPLG (223 aa)). Residues 158 to 165 (KILKKHDK) form an important for inositol polyphosphate binding region. Residues 229–259 (APAWTTFRVGLFCGIFIVLNITLVLAAVFKL) form a helical membrane-spanning segment. Topologically, residues 260–264 (ETDRS) are extracellular. A helical membrane pass occupies residues 265–296 (IWPLIRIYRGGFLLIEFLFLLGINTYGWRQAG). Topologically, residues 297-309 (VNHVLIFELNPRS) are cytoplasmic. The helical transmembrane segment at 310–337 (NLSHQHLFEIAGFLGILWCLSLLACFFA) threads the bilayer. Topologically, residues 338 to 343 (PISVIP) are extracellular. Residues 344–365 (TYVYPLALYGFMVFFLINPTKT) traverse the membrane as a helical segment. Positions 366 to 383 (FYYKSRFWLLKLLFRVFT) form an intramembrane region, helical. At 384-388 (APFHK) the chain is on the cytoplasmic side. A discontinuously helical membrane pass occupies residues 389 to 422 (VGFADFWLADQLNSLSVILMDLEYMICFYSLELK). The phosphate site is built by Asp398 and Asn401. Residues 423–429 (WDESKGL) are Extracellular-facing. The chain crosses the membrane as a discontinuously helical span at residues 430-471 (LPNNSEESGICHKYTYGVRAIVQCIPAWLRFIQCLRRYRDTK). Positions 439-643 (ICHKYTYGVR…LNADDQTLLE (205 aa)) constitute an EXS domain. Position 472 (Arg472) is a topological domain, cytoplasmic. A helical transmembrane segment spans residues 473 to 503 (AFPHLVNAGKYSTTFFMVTFAALYSTHKERG). The phosphate site is built by Lys482 and Tyr483. Over 504-506 (HSD) the chain is Extracellular. The helical transmembrane segment at 507-534 (TMVFFYLWIVFYIISSCYTLIWDLKMDW) threads the bilayer. Topologically, residues 535–553 (GLFDKNAGENTFLREEIVY) are cytoplasmic. The chain crosses the membrane as a discontinuously helical span at residues 554-585 (PQKAYYYCAIIEDVILRFAWTIQISITSTTLL). Arg570 provides a ligand contact to phosphate. At 586 to 587 (PH) the chain is on the extracellular side. Residues 588-626 (SGDIIATVFAPLEVFRRFVWNFFRLENEHLNNCGEFRAV) traverse the membrane as a helical segment. Residues Arg603 and Arg604 each coordinate phosphate. Residues 627-696 (RDISVAPLNA…IEDTDDEANT (70 aa)) lie on the Cytoplasmic side of the membrane. Ser668 carries the phosphoserine modification. Positions 673 to 696 (RLASQSKARDTKVLIEDTDDEANT) are disordered. Phosphothreonine is present on Thr690.

It belongs to the SYG1 (TC 2.A.94) family. In terms of assembly, homodimer. Widely expressed. Detected in spleen, lymph node, thymus, leukocytes, bone marrow, heart, kidney, pancreas and skeletal muscle.

The protein localises to the cell membrane. The catalysed reaction is phosphate(in) = phosphate(out). Allosterically activated by inositol hexakisphosphate (Ins6P). Inorganic ion transporter that mediates phosphate ion export across plasma membrane. Plays a major role in phosphate homeostasis, preventing intracellular phosphate accumulation and possible calcium phosphate precipitation, ultimately preserving calcium signaling. Binds inositol hexakisphosphate (Ins6P) and similar inositol polyphosphates, such as 5-diphospho-inositol pentakisphosphate (5-InsP7), which are important intracellular signaling molecules involved in regulation of phosphate flux. This is Solute carrier family 53 member 1 from Homo sapiens (Human).